A 310-amino-acid chain; its full sequence is Transcription factor LRL2 (310 aa).

2 stretches are compositionally biased toward low complexity: residues 1-20 (MNSSSLLTPSSSPSPHLQSP) and 104-126 (QTQTQSQATASATTGGATAQPQT). 2 disordered regions span residues 1-23 (MNSSSLLTPSSSPSPHLQSPATF) and 95-143 (FHLP…PHSI). Residues 136 to 149 (QATDPHSIAERLRR) form a basic motif; degenerate region. A bHLH domain is found at 136–185 (QATDPHSIAERLRRERIAERMKSLQELVPNGNKTDKASMLDEIIDYVKFL). The helix-loop-helix motif stretch occupies residues 150–185 (ERIAERMKSLQELVPNGNKTDKASMLDEIIDYVKFL). Residues 203 to 225 (ASSQISEDAGGSHENTSSSGEAK) form a disordered region.

In terms of assembly, homodimer. In terms of tissue distribution, expressed constitutively in roots, leaves, stems, and flowers.

The protein resides in the nucleus. Functionally, transcription factor that regulates the development of root hairs. Transcription factor that regulates the development of sperm cells. The chain is Transcription factor LRL2 from Arabidopsis thaliana (Mouse-ear cress).